The sequence spans 660 residues: Threonine--tRNA ligase (660 aa).

Positions M1–Y49 constitute a TGS domain. A catalytic region spans residues D225–P554. Zn(2+) is bound by residues C318, H369, and H531.

It belongs to the class-II aminoacyl-tRNA synthetase family. In terms of assembly, homodimer. The cofactor is Zn(2+).

It is found in the cytoplasm. The catalysed reaction is tRNA(Thr) + L-threonine + ATP = L-threonyl-tRNA(Thr) + AMP + diphosphate + H(+). Functionally, catalyzes the attachment of threonine to tRNA(Thr) in a two-step reaction: L-threonine is first activated by ATP to form Thr-AMP and then transferred to the acceptor end of tRNA(Thr). This chain is Threonine--tRNA ligase, found in Thermoplasma volcanium (strain ATCC 51530 / DSM 4299 / JCM 9571 / NBRC 15438 / GSS1).